Consider the following 166-residue polypeptide: Probable tyrosine-protein phosphatase DG1060 (166 aa).

Residues asparagine 9 to tryptophan 162 form the Tyrosine-protein phosphatase domain. Cysteine 101 (phosphocysteine intermediate) is an active-site residue.

This sequence belongs to the protein-tyrosine phosphatase family.

It is found in the cytoplasm. It carries out the reaction O-phospho-L-tyrosyl-[protein] + H2O = L-tyrosyl-[protein] + phosphate. In Dictyostelium discoideum (Social amoeba), this protein is Probable tyrosine-protein phosphatase DG1060 (DG1060).